We begin with the raw amino-acid sequence, 143 residues long: Large-conductance mechanosensitive channel (143 aa).

The next 3 helical transmembrane spans lie at 21 to 41 (VGVI…ADII), 44 to 64 (VVGL…LGTV), and 86 to 106 (GNFI…FMMV).

It belongs to the MscL family. Homopentamer.

Its subcellular location is the cell inner membrane. In terms of biological role, channel that opens in response to stretch forces in the membrane lipid bilayer. May participate in the regulation of osmotic pressure changes within the cell. This chain is Large-conductance mechanosensitive channel, found in Variovorax paradoxus (strain S110).